The chain runs to 442 residues: Chromosomal replication initiator protein DnaA (442 aa).

A domain I, interacts with DnaA modulators region spans residues 1–69 (METLWDGILS…AQAGEQVIGR (69 aa)). The tract at residues 69-103 (RPIQVDFIVSEQSEEALKPVIEREPAPAAPPANVA) is domain II. The segment at 104–320 (SLNSKYTFSR…GALIRAVAYV (217 aa)) is domain III, AAA+ region. ATP-binding residues include G148, G150, K151, and T152. Residues 321–442 (SISGLPMTVE…GNRLEADARH (122 aa)) are domain IV, binds dsDNA.

This sequence belongs to the DnaA family. Oligomerizes as a right-handed, spiral filament on DNA at oriC.

Its subcellular location is the cytoplasm. Plays an essential role in the initiation and regulation of chromosomal replication. ATP-DnaA binds to the origin of replication (oriC) to initiate formation of the DNA replication initiation complex once per cell cycle. Binds the DnaA box (a 9 base pair repeat at the origin) and separates the double-stranded (ds)DNA. Forms a right-handed helical filament on oriC DNA; dsDNA binds to the exterior of the filament while single-stranded (ss)DNA is stabiized in the filament's interior. The ATP-DnaA-oriC complex binds and stabilizes one strand of the AT-rich DNA unwinding element (DUE), permitting loading of DNA polymerase. After initiation quickly degrades to an ADP-DnaA complex that is not apt for DNA replication. Binds acidic phospholipids. This chain is Chromosomal replication initiator protein DnaA, found in Gloeobacter violaceus (strain ATCC 29082 / PCC 7421).